We begin with the raw amino-acid sequence, 194 residues long: Ribosomal RNA small subunit methyltransferase G (194 aa).

S-adenosyl-L-methionine is bound by residues Gly-70, Tyr-75, 121–122 (VE), and Arg-135.

It belongs to the methyltransferase superfamily. RNA methyltransferase RsmG family.

It localises to the cytoplasm. It catalyses the reaction guanosine(527) in 16S rRNA + S-adenosyl-L-methionine = N(7)-methylguanosine(527) in 16S rRNA + S-adenosyl-L-homocysteine. Specifically methylates the N7 position of guanine in position 527 of 16S rRNA. The sequence is that of Ribosomal RNA small subunit methyltransferase G from Aliarcobacter butzleri (strain RM4018) (Arcobacter butzleri).